The sequence spans 442 residues: D-serine dehydratase (442 aa).

Lysine 118 carries the post-translational modification N6-(pyridoxal phosphate)lysine.

This sequence belongs to the serine/threonine dehydratase family. DsdA subfamily. Monomer. Pyridoxal 5'-phosphate is required as a cofactor.

The enzyme catalyses D-serine = pyruvate + NH4(+). This chain is D-serine dehydratase, found in Shigella flexneri.